A 251-amino-acid polypeptide reads, in one-letter code: Small ribosomal subunit protein uS2 (251 aa).

Belongs to the universal ribosomal protein uS2 family.

The polypeptide is Small ribosomal subunit protein uS2 (Deinococcus deserti (strain DSM 17065 / CIP 109153 / LMG 22923 / VCD115)).